The primary structure comprises 882 residues: Alanine--tRNA ligase (882 aa).

Zn(2+)-binding residues include H570, H574, C672, and H676.

This sequence belongs to the class-II aminoacyl-tRNA synthetase family. Zn(2+) is required as a cofactor.

The protein resides in the cytoplasm. The enzyme catalyses tRNA(Ala) + L-alanine + ATP = L-alanyl-tRNA(Ala) + AMP + diphosphate. Its function is as follows. Catalyzes the attachment of alanine to tRNA(Ala) in a two-step reaction: alanine is first activated by ATP to form Ala-AMP and then transferred to the acceptor end of tRNA(Ala). Also edits incorrectly charged Ser-tRNA(Ala) and Gly-tRNA(Ala) via its editing domain. The sequence is that of Alanine--tRNA ligase from Xanthomonas campestris pv. campestris (strain ATCC 33913 / DSM 3586 / NCPPB 528 / LMG 568 / P 25).